The primary structure comprises 40 residues: Natriuretic peptide PpNP-b (40 aa).

A propeptide spanning residues 1 to 8 is cleaved from the precursor; the sequence is SGSKTANI. C12 and C28 are disulfide-bonded. The segment at 20–40 is disordered; sequence IGTTSGMGCGRPRPKPTPGGS.

This sequence belongs to the natriuretic peptide family. As to expression, expressed by the venom gland.

Its subcellular location is the secreted. Functionally, snake venom natriuretic peptide that targets both NPR1 and NPR2. Exhibits hypotensive and vasodepressor activities. In Pseudechis porphyriacus (Red-bellied black snake), this protein is Natriuretic peptide PpNP-b.